A 513-amino-acid chain; its full sequence is ATP synthase subunit alpha (513 aa).

169 to 176 (GDRQTGKT) is an ATP binding site.

It belongs to the ATPase alpha/beta chains family. In terms of assembly, F-type ATPases have 2 components, CF(1) - the catalytic core - and CF(0) - the membrane proton channel. CF(1) has five subunits: alpha(3), beta(3), gamma(1), delta(1), epsilon(1). CF(0) has three main subunits: a(1), b(2) and c(9-12). The alpha and beta chains form an alternating ring which encloses part of the gamma chain. CF(1) is attached to CF(0) by a central stalk formed by the gamma and epsilon chains, while a peripheral stalk is formed by the delta and b chains.

The protein resides in the cell inner membrane. It catalyses the reaction ATP + H2O + 4 H(+)(in) = ADP + phosphate + 5 H(+)(out). In terms of biological role, produces ATP from ADP in the presence of a proton gradient across the membrane. The alpha chain is a regulatory subunit. This chain is ATP synthase subunit alpha, found in Yersinia pseudotuberculosis serotype O:1b (strain IP 31758).